Reading from the N-terminus, the 313-residue chain is Putative S-adenosyl-L-methionine-dependent methyltransferase MAV_5150 (313 aa).

Residues Asp-139 and Asp-168–Leu-169 each bind S-adenosyl-L-methionine.

It belongs to the UPF0677 family.

Functionally, exhibits S-adenosyl-L-methionine-dependent methyltransferase activity. In Mycobacterium avium (strain 104), this protein is Putative S-adenosyl-L-methionine-dependent methyltransferase MAV_5150.